We begin with the raw amino-acid sequence, 154 residues long: uncharacterized protein (154 aa).

Residues 1–33 (MTKRGIQAFAGGIILATAVLAAVFYLTDEDQAA) form the signal peptide.

This is an uncharacterized protein from Bacillus subtilis (strain 168).